Consider the following 245-residue polypeptide: tRNA (guanine-N(1)-)-methyltransferase (245 aa).

S-adenosyl-L-methionine-binding positions include Gly111 and 131 to 136 (MGDYVL).

This sequence belongs to the RNA methyltransferase TrmD family. As to quaternary structure, homodimer.

Its subcellular location is the cytoplasm. The catalysed reaction is guanosine(37) in tRNA + S-adenosyl-L-methionine = N(1)-methylguanosine(37) in tRNA + S-adenosyl-L-homocysteine + H(+). Functionally, specifically methylates guanosine-37 in various tRNAs. The polypeptide is tRNA (guanine-N(1)-)-methyltransferase (Staphylococcus aureus (strain Mu3 / ATCC 700698)).